Here is a 285-residue protein sequence, read N- to C-terminus: MRASPLLSLSIFITFVSIFSLLTYLPSFFAQISRIERQLEEELDEFLNIEHEFRKEFDIYPKNYERRQKKHVYSYCECEYINTCPPGRIGITGPDGQPGKDGLPGMPGSPGIPGELPNILYQQVFGCRICPYGPKGKSGYKGIDGPPGIPGWPGEPGVRGMNGERGSTGLDGAPGEPGSPGLPGFAGLPGSIGITGIKGVMGEVGEPGAPGIPGEEGLSGPTGQPGSPGSIGAMGYEGAYGDRGEPGPPGPIGRRGGPGLDSHYCPCPSRKMFLSILREKTKKQL.

Triple-helical region regions lie at residues 87–116 and 133–261; these read GRIG…PGEL and GPKG…PGLD. Low complexity predominate over residues 207 to 231; it reads PGAPGIPGEEGLSGPTGQPGSPGSI. The segment at 207–257 is disordered; that stretch reads PGAPGIPGEEGLSGPTGQPGSPGSIGAMGYEGAYGDRGEPGPPGPIGRRGG.

The protein belongs to the cuticular collagen family. In terms of assembly, collagen polypeptide chains are complexed within the cuticle by disulfide bonds and other types of covalent cross-links.

In terms of biological role, nematode cuticles are composed largely of collagen-like proteins. The cuticle functions both as an exoskeleton and as a barrier to protect the worm from its environment. The chain is Putative cuticle collagen 75 (col-75) from Caenorhabditis elegans.